Reading from the N-terminus, the 165-residue chain is UPF0178 protein Bphyt_5655 (165 aa).

2 disordered regions span residues 115-134 (LRGSGVDTGGPSAFSQRDSK) and 139-165 (ELDRWLSRQRPQPDASAPQSADEPPTE).

It belongs to the UPF0178 family.

The protein is UPF0178 protein Bphyt_5655 of Paraburkholderia phytofirmans (strain DSM 17436 / LMG 22146 / PsJN) (Burkholderia phytofirmans).